The primary structure comprises 319 residues: tRNA pseudouridine synthase B (319 aa).

The Nucleophile role is filled by Asp47.

It belongs to the pseudouridine synthase TruB family. Type 1 subfamily.

It catalyses the reaction uridine(55) in tRNA = pseudouridine(55) in tRNA. Functionally, responsible for synthesis of pseudouridine from uracil-55 in the psi GC loop of transfer RNAs. The protein is tRNA pseudouridine synthase B of Pseudoalteromonas translucida (strain TAC 125).